A 337-amino-acid polypeptide reads, in one-letter code: MVVPKVGINGFGRIGRIVFRNAIEHEGVDIVAVNDPFIEVHYAAYMLKYDSTHGRFNGTVEFDGNTLIVNGKKIKFYAERDPAQIPWSETGAEYVVESTGVFTKQEKASLHLKGGAKKVIISAPSSDSPMFVMGVNNDQYTKDITVLSNASCTTNCLAPLAKVINDKFGIVEGLMTTVHSYTATQKVVDGPSNKDWRGGRTAAQNIIPSSTGAAKAVGKVIPSLNGKLTGMSMRVPTSNVSVVDLTARLEKAATYDEIKQAVKEASEGPLKGVLGYTEDDVVSSDLNGDPHSSIFDAKAGIALNSNFVKLVSWYDNEWGYSRRVIDLIAYIAQVDAQ.

Residues R13–I14, D35, and R80 contribute to the NAD(+) site. D-glyceraldehyde 3-phosphate-binding positions include S151–T153, T182, T211–G212, and R234. C152 functions as the Nucleophile in the catalytic mechanism. N316 is an NAD(+) binding site.

Belongs to the glyceraldehyde-3-phosphate dehydrogenase family. Homotetramer.

Its subcellular location is the cytoplasm. It catalyses the reaction D-glyceraldehyde 3-phosphate + phosphate + NAD(+) = (2R)-3-phospho-glyceroyl phosphate + NADH + H(+). It functions in the pathway carbohydrate degradation; glycolysis; pyruvate from D-glyceraldehyde 3-phosphate: step 1/5. The polypeptide is Glyceraldehyde-3-phosphate dehydrogenase (GPD1) (Monascus purpureus (Red mold)).